Here is a 621-residue protein sequence, read N- to C-terminus: DDB1- and CUL4-associated factor 10 homolog (621 aa).

WD repeat units follow at residues 46–85, 89–127, 131–170, and 176–215; these read GRTG…EIFK, AHTD…QKLR, GHSN…EQGL, and FHAS…TLHK. Disordered regions lie at residues 305 to 349 and 437 to 483; these read VRSE…PRQA and LMGS…TTVR. Position 307 is a phosphoserine (serine 307). The span at 324-342 shows a compositional bias: polar residues; the sequence is STTLASRSSLNESQDQDTV. A compositionally biased stretch (low complexity) spans 454–478; sequence ESNQSSSSSSSSSSSSSSSSSSNNS. Phosphoserine occurs at positions 494 and 497. One copy of the WD 5 repeat lies at 588–621; the sequence is EHQDVVLCAKFSPREPLLVTGCNGGEVTWYRPNL.

This sequence belongs to the WD repeat DCAF10 family.

The sequence is that of DDB1- and CUL4-associated factor 10 homolog from Drosophila melanogaster (Fruit fly).